A 558-amino-acid polypeptide reads, in one-letter code: MELRARGWWLLCAAAALVACARGDPASKSRSCGEVRQIYGAKGFSLSDVPQAEISGEHLRICPQGYTCCTSEMEENLANRSHAELETALRDSSRVLQAMLATQLRSFDDHFQHLLNDSERTLQATFPGAFGELYTQNARAFRDLYSELRLYYRGANLHLEETLAEFWARLLERLFKQLHPQLLLPDDYLDCLGKQAEALRPFGEAPRELRLRATRAFVAARSFVQGLGVASDVVRKVAQVPLGPECSRAVMKLVYCAHCLGVPGARPCPDYCRNVLKGCLANQADLDAEWRNLLDSMVLITDKFWGTSGVESVIGSVHTWLAEAINALQDNRDTLTAKVIQGCGNPKVNPQGPGPEEKRRRGKLAPRERPPSGTLEKLVSEAKAQLRDVQDFWISLPGTLCSEKMALSTASDDRCWNGMARGRYLPEVMGDGLANQINNPEVEVDITKPDMTIRQQIMQLKIMTNRLRSAYNGNDVDFQDASDDGSGSGSGDGCLDDLCSRKVSRKSSSSRTPLTHALPGLSEQEGQKTSAASCPQPPTFLLPLLLFLALTVARPRWR.

The signal sequence occupies residues 1–23 (MELRARGWWLLCAAAALVACARG). Disulfide bonds link cysteine 32–cysteine 68, cysteine 62–cysteine 256, cysteine 69–cysteine 259, cysteine 191–cysteine 343, cysteine 246–cysteine 279, cysteine 268–cysteine 415, and cysteine 272–cysteine 401. N-linked (GlcNAc...) asparagine glycosylation is found at asparagine 79 and asparagine 116. Residues 341–374 (QGCGNPKVNPQGPGPEEKRRRGKLAPRERPPSGT) are disordered. The segment covering 355 to 370 (PEEKRRRGKLAPRERP) has biased composition (basic and acidic residues). O-linked (Xyl...) (heparan sulfate) serine glycans are attached at residues serine 486, serine 488, and serine 490. Residues 505 to 534 (RKSSSSRTPLTHALPGLSEQEGQKTSAASC) form a disordered region. Serine 530 is lipidated: GPI-anchor amidated serine. Positions 531–558 (AASCPQPPTFLLPLLLFLALTVARPRWR) are cleaved as a propeptide — removed in mature form.

The protein belongs to the glypican family. Post-translationally, S-nitrosylated in a Cu(2+)-dependent manner. Nitric acid (NO) is released from the nitrosylated cysteines by ascorbate or by some other reducing agent, in a Cu(2+) or Zn(2+) dependent manner. This free nitric oxide is then capable of cleaving the heparan sulfate side chains. In terms of processing, N- and O-glycosylated. N-glycosylation is mainly of the complex type containing sialic acid. O-glycosylated with heparan sulfate. The heparan sulfate chains can be cleaved either by the action of heparanase or, degraded by a deaminative process that uses nitric oxide (NO) released from the S-nitrosylated cysteines. This process is triggered by ascorbate, or by some other reducing agent, in a Cu(2+)- or Zn(2+) dependent manner. Cu(2+) ions are provided by ceruloproteins such as APP, PRNP or CP which associate with GCP1 in intracellular compartments or lipid rafts. This cell-associated glypican is further processed to give rise to a medium-released species.

The protein resides in the cell membrane. It localises to the endosome. The protein localises to the secreted. Its subcellular location is the extracellular space. Its function is as follows. Cell surface proteoglycan that bears heparan sulfate. Binds, via the heparan sulfate side chains, alpha-4 (V) collagen and participates in Schwann cell myelination. May act as a catalyst in increasing the rate of conversion of prion protein PRPN(C) to PRNP(Sc) via associating (via the heparan sulfate side chains) with both forms of PRPN, targeting them to lipid rafts and facilitating their interaction. Required for proper skeletal muscle differentiation by sequestering FGF2 in lipid rafts preventing its binding to receptors (FGFRs) and inhibiting the FGF-mediated signaling. The chain is Glypican-1 (GPC1) from Homo sapiens (Human).